The following is a 499-amino-acid chain: uncharacterized protein (499 aa).

This is an uncharacterized protein from Metamycoplasma hominis (strain ATCC 23114 / DSM 25592 / NBRC 14850 / NCTC 10111 / PG21) (Mycoplasma hominis).